A 336-amino-acid polypeptide reads, in one-letter code: tRNA N6-adenosine threonylcarbamoyltransferase (336 aa).

Residues His-111, His-115, and Tyr-132 each contribute to the Fe cation site. Substrate-binding positions include Tyr-132–Gly-136, Asp-164, Asp-185, and Ser-264. Asp-292 provides a ligand contact to Fe cation.

This sequence belongs to the KAE1 / TsaD family. Fe(2+) is required as a cofactor.

It is found in the cytoplasm. It carries out the reaction L-threonylcarbamoyladenylate + adenosine(37) in tRNA = N(6)-L-threonylcarbamoyladenosine(37) in tRNA + AMP + H(+). Its function is as follows. Required for the formation of a threonylcarbamoyl group on adenosine at position 37 (t(6)A37) in tRNAs that read codons beginning with adenine. Is probably involved in the transfer of the threonylcarbamoyl moiety of threonylcarbamoyl-AMP (TC-AMP) to the N6 group of A37. The protein is tRNA N6-adenosine threonylcarbamoyltransferase of Sulfurisphaera tokodaii (strain DSM 16993 / JCM 10545 / NBRC 100140 / 7) (Sulfolobus tokodaii).